The chain runs to 179 residues: Large ribosomal subunit protein uL5 (179 aa).

The protein belongs to the universal ribosomal protein uL5 family. Part of the 50S ribosomal subunit; part of the 5S rRNA/L5/L18/L25 subcomplex. Contacts the 5S rRNA and the P site tRNA. Forms a bridge to the 30S subunit in the 70S ribosome.

Functionally, this is one of the proteins that bind and probably mediate the attachment of the 5S RNA into the large ribosomal subunit, where it forms part of the central protuberance. In the 70S ribosome it contacts protein S13 of the 30S subunit (bridge B1b), connecting the 2 subunits; this bridge is implicated in subunit movement. Contacts the P site tRNA; the 5S rRNA and some of its associated proteins might help stabilize positioning of ribosome-bound tRNAs. This chain is Large ribosomal subunit protein uL5, found in Rickettsia peacockii (strain Rustic).